The sequence spans 253 residues: Ethylene-responsive transcription factor RAP2-11 (253 aa).

The segment at residues 21-78 is a DNA-binding region (AP2/ERF); the sequence is KFVGVRQRPSGKWVAEIKDTTQKIRMWLGTFETAEEAARAYDEAACLLRGSNTRTNFA.

Belongs to the AP2/ERF transcription factor family. ERF subfamily.

It is found in the nucleus. Functionally, probably acts as a transcriptional activator. Binds to the GCC-box pathogenesis-related promoter element. May be involved in the regulation of gene expression by stress factors and by components of stress signal transduction pathways. This is Ethylene-responsive transcription factor RAP2-11 (RAP2-11) from Arabidopsis thaliana (Mouse-ear cress).